The following is a 318-amino-acid chain: NADH-ubiquinone oxidoreductase chain 1 (318 aa).

A run of 8 helical transmembrane segments spans residues 5 to 25 (IISS…LTLI), 69 to 89 (SIFL…ILWI), 102 to 122 (LGLM…LTSG), 148 to 168 (LGLM…KLFI), 174 to 194 (IWLL…TLAE), 215 to 235 (VEFS…NILF), 253 to 273 (LYFS…FLWV), and 293 to 313 (FLPI…FFGV).

Belongs to the complex I subunit 1 family.

The protein localises to the mitochondrion inner membrane. The enzyme catalyses a ubiquinone + NADH + 5 H(+)(in) = a ubiquinol + NAD(+) + 4 H(+)(out). Functionally, core subunit of the mitochondrial membrane respiratory chain NADH dehydrogenase (Complex I) that is believed to belong to the minimal assembly required for catalysis. Complex I functions in the transfer of electrons from NADH to the respiratory chain. The immediate electron acceptor for the enzyme is believed to be ubiquinone. This chain is NADH-ubiquinone oxidoreductase chain 1 (MT-ND1), found in Myxine glutinosa (Atlantic hagfish).